We begin with the raw amino-acid sequence, 292 residues long: 33 kDa chaperonin (292 aa).

Intrachain disulfides connect cysteine 237/cysteine 239 and cysteine 270/cysteine 273.

The protein belongs to the HSP33 family. Post-translationally, under oxidizing conditions two disulfide bonds are formed involving the reactive cysteines. Under reducing conditions zinc is bound to the reactive cysteines and the protein is inactive.

It is found in the cytoplasm. Functionally, redox regulated molecular chaperone. Protects both thermally unfolding and oxidatively damaged proteins from irreversible aggregation. Plays an important role in the bacterial defense system toward oxidative stress. This Lachnoclostridium phytofermentans (strain ATCC 700394 / DSM 18823 / ISDg) (Clostridium phytofermentans) protein is 33 kDa chaperonin.